Consider the following 37-residue polypeptide: GFFSLIKGVAKIATKGLAKNLGKMGLDLVGCKISKEC.

Residues Cys-31 and Cys-37 are joined by a disulfide bond.

Expressed by the skin glands.

It is found in the secreted. Its function is as follows. Mast cell degranulating peptide. Causes histamine release from rat peritoneal mast cells in vitro. Has antibacterial activity against the Gram-negative bacterium E.coli K12 and Gram-positive bacterium M.luteus NCT C2665. In Lithobates sevosus (Dusky gopher frog), this protein is Esculentin-2SE.